The primary structure comprises 116 residues: Large ribosomal subunit protein bL17 (116 aa).

The protein belongs to the bacterial ribosomal protein bL17 family. In terms of assembly, part of the 50S ribosomal subunit. Contacts protein L32.

The polypeptide is Large ribosomal subunit protein bL17 (Prochlorococcus marinus (strain MIT 9215)).